A 183-amino-acid chain; its full sequence is Ribulose bisphosphate carboxylase small subunit, chloroplastic 4 (183 aa).

Residues 1 to 57 (MASSLMSNAATTMAAATTTAQANMVAPFNGLKSISAFPVTRKNNDITSVASNGGRVQ) constitute a chloroplast transit peptide.

The protein belongs to the RuBisCO small chain family. Heterohexadecamer of 8 large and 8 small subunits.

The protein localises to the plastid. Its subcellular location is the chloroplast. Functionally, ruBisCO catalyzes two reactions: the carboxylation of D-ribulose 1,5-bisphosphate, the primary event in carbon dioxide fixation, as well as the oxidative fragmentation of the pentose substrate. Both reactions occur simultaneously and in competition at the same active site. Although the small subunit is not catalytic it is essential for maximal activity. The protein is Ribulose bisphosphate carboxylase small subunit, chloroplastic 4 of Mesembryanthemum crystallinum (Common ice plant).